A 487-amino-acid polypeptide reads, in one-letter code: Rhoptry apical surface protein 1 (487 aa).

Positions 337–487 (EVAMSGRGGH…EEEQPLLFTQ (151 aa)) are disordered. Basic and acidic residues-rich tracts occupy residues 385-399 (DGIR…DRRA) and 454-475 (EKNE…GVEY).

In terms of assembly, interacts with RASP2.

It is found in the cytoplasmic vesicle. The protein resides in the secretory vesicle. The protein localises to the rhoptry membrane. The chain is Rhoptry apical surface protein 1 from Toxoplasma gondii (strain ATCC 50853 / GT1).